Reading from the N-terminus, the 236-residue chain is Sensory rhodopsin I (236 aa).

A run of 7 helical transmembrane segments spans residues 6-26 (VVYG…GFLY), 37-57 (ILAA…AMVF), 74-94 (YLDW…TAGA), 98-118 (AIFG…GAVV), 126-146 (ALFG…YLIF), 167-187 (VGLL…GLGF), and 192-212 (GVSI…VYFF). At Lys-205 the chain carries N6-(retinylidene)lysine.

It belongs to the archaeal/bacterial/fungal opsin family. As to quaternary structure, interacts with Htr1. In terms of processing, the covalent binding of retinal to the apoprotein, bacterioopsin, generates bacteriorhodopsin.

It is found in the membrane. Functionally, photoattractant rhodopsin. This Haloarcula marismortui (strain ATCC 43049 / DSM 3752 / JCM 8966 / VKM B-1809) (Halobacterium marismortui) protein is Sensory rhodopsin I (sop1).